A 680-amino-acid chain; its full sequence is Zinc finger protein 263 (680 aa).

Lysine 19 is covalently cross-linked (Glycyl lysine isopeptide (Lys-Gly) (interchain with G-Cter in SUMO2)). An SCAN box domain is found at 43–125 (HLRFRRFRFQ…TLVERMQKEL (83 aa)). Residues 147–191 (LPLETAGESPSFKLEPMETERSPGPRLQELLDPSPQRDSQAVKER) are disordered. Lysine 159 participates in a covalent cross-link: Glycyl lysine isopeptide (Lys-Gly) (interchain with G-Cter in SUMO2). Phosphoserine is present on residues serine 168 and serine 180. Glycyl lysine isopeptide (Lys-Gly) (interchain with G-Cter in SUMO2) cross-links involve residues lysine 286, lysine 300, and lysine 376. 5 consecutive C2H2-type zinc fingers follow at residues 378 to 400 (HLCA…QRIH), 434 to 456 (HKCL…QRTH), 462 to 484 (FQCN…QRTH), 490 to 512 (YKCP…QRIH), and 518 to 540 (YRCS…ERTH). Glycyl lysine isopeptide (Lys-Gly) (interchain with G-Cter in SUMO2) cross-links involve residues lysine 570 and lysine 579. 4 consecutive C2H2-type zinc fingers follow at residues 572 to 594 (FECS…QRTH), 600 to 622 (YKCI…QRIH), 628 to 650 (YTCH…LRTH), and 656 to 678 (YKCS…QRTH).

It belongs to the krueppel C2H2-type zinc-finger protein family. As to quaternary structure, interacts with a number of proteins involved in chromatin modification and transcriptional corepression including DNMT1, DNMT3A, HDAC2, PHF8, TRIM28/KAP1, SETDB1, EZH2, UHRF1, CBX3/HP1-gamma, and CBX5/HP1-alpha; recruits these proteins to the SIX3 promoter region, leading to SIX3 transcriptional repression. Interacts with MAPK3/ERK1 and MAPK1/ERK2. In terms of processing, ubiquitinated, leading to proteasomal degradation. As to expression, expressed in Purkinje cells in the brain (at protein level).

The protein resides in the nucleus. Functionally, transcription factor that binds to the consensus sequence 5'-TCCTCCC-3' and acts as a transcriptional repressor. Binds to the promoter region of SIX3 and recruits other proteins involved in chromatin modification and transcriptional corepression, resulting in methylation of the promoter and transcriptional repression. Acts as a transcriptional repressor of HS3ST1 and HS3ST3A1 via binding to gene promoter regions. The sequence is that of Zinc finger protein 263 from Mus musculus (Mouse).